The sequence spans 461 residues: Cysteine--tRNA ligase (461 aa).

Residue Cys28 participates in Zn(2+) binding. Residues 30–40 (ITVYDLCHIGH) carry the 'HIGH' region motif. Cys209, His234, and Glu238 together coordinate Zn(2+). A 'KMSKS' region motif is present at residues 266 to 270 (KMSKS). ATP is bound at residue Lys269.

This sequence belongs to the class-I aminoacyl-tRNA synthetase family. As to quaternary structure, monomer. Zn(2+) is required as a cofactor.

It is found in the cytoplasm. The catalysed reaction is tRNA(Cys) + L-cysteine + ATP = L-cysteinyl-tRNA(Cys) + AMP + diphosphate. The sequence is that of Cysteine--tRNA ligase from Shigella sonnei (strain Ss046).